We begin with the raw amino-acid sequence, 260 residues long: ProSAAS (260 aa).

An N-terminal signal peptide occupies residues 1 to 33 (MAGSPLLCGPRAGGVGLLVLLLLGLLRLPPTLS). The interval 34 to 215 (ARPVKEPRSL…SSEPEAAPAP (182 aa)) is proSAAS(1-180). Disordered regions lie at residues 162-187 (AALR…ADET) and 206-234 (SSEP…PPEN). Positions 221 to 260 (AVDQDLGPEVPPENVLGALLRVKRLENSSPQAPARRLLPP) are C-terminal inhibitory domain; interacts with PCSK1. Positions 239–244 (LLRVKR) match the Sufficient for inhibition of PCSK1 motif.

In terms of assembly, interacts via the C-terminal inhibitory domain with PCSK1 65 kDa form. In terms of processing, proteolytically cleaved in the Golgi. Big SAAS, Little SAAS, PEN and Big LEN are the major processed peptides in proSAAS-overexpressing PC-12 phaeochromocytoma cells (lacking PCSK1 and PCSK2 endopeptidases). Peptides corresponding to PEN and a proSAAS aa 40-59 have been detected in wild-type PC-12 cells. In terms of tissue distribution, expressed in adult brain (all major structural regions), adrenal gland (medulla) and spinal cord (dorsal and ventral horn). Expressed in pancreatic islands.

It localises to the secreted. The protein resides in the golgi apparatus. Its subcellular location is the trans-Golgi network. In terms of biological role, may function in the control of the neuroendocrine secretory pathway. Proposed be a specific endogenous inhibitor of PCSK1. ProSAAS and Big PEN-LEN, both containing the C-terminal inhibitory domain, but not the processed peptides reduce PCSK1 activity in the endoplasmic reticulum and Golgi. It reduces the activity of the 87 kDa form but not the autocatalytically derived 65 kDa form of PCSK1. Subsequent processing of proSAAS may eliminate the inhibition. Slows down convertase-mediated processing of proopiomelanocortin and proenkephalin. May control the intracellular timing of PCSK1 rather than its total level of activity. Functionally, endogenous ligand for GPR171. Neuropeptide involved in the regulation of feeding. This Rattus norvegicus (Rat) protein is ProSAAS (Pcsk1n).